A 430-amino-acid polypeptide reads, in one-letter code: Purine nucleoside phosphorylase LACC1 (430 aa).

An N6-acetyllysine modification is found at Lys247. 3 residues coordinate Zn(2+): His250, Cys284, and His301.

This sequence belongs to the purine nucleoside phosphorylase YfiH/LACC1 family. As to quaternary structure, interacts with FASN. Interacts with SDHA. Interacts with ATF6, EIF2AK3 and ERN1. Phosphorylated on tyrosine residues. In terms of tissue distribution, ubiquitously expressed, with higher expression levels in immune-related tissues such as lymph nodes and spleen. Expressed in both intestinal and peripheral myeloid-derived cells.

It is found in the cytoplasm. The protein localises to the nucleus. The protein resides in the endoplasmic reticulum. Its subcellular location is the peroxisome. It catalyses the reaction adenosine + phosphate = alpha-D-ribose 1-phosphate + adenine. The catalysed reaction is inosine + phosphate = alpha-D-ribose 1-phosphate + hypoxanthine. The enzyme catalyses guanosine + phosphate = alpha-D-ribose 1-phosphate + guanine. It carries out the reaction S-methyl-5'-thioadenosine + phosphate = 5-(methylsulfanyl)-alpha-D-ribose 1-phosphate + adenine. It catalyses the reaction adenosine + H2O + H(+) = inosine + NH4(+). Purine nucleoside enzyme that catalyzes the phosphorolysis of adenosine, guanosine and inosine nucleosides, yielding D-ribose 1-phosphate and the respective free bases, adenine, guanine and hypoxanthine. Also catalyzes the phosphorolysis of S-methyl-5'-thioadenosine into adenine and S-methyl-5-thio-alpha-D-ribose 1-phosphate. Also has adenosine deaminase activity. Acts as a regulator of innate immunity in macrophages by modulating the purine nucleotide metabolism, thereby regulating the metabolic function and bioenergetic state of macrophages. Enables a purine nucleotide cycle between adenosine and inosine monophosphate and adenylosuccinate that prevents cytoplasmic acidification and balances the cytoplasmic-mitochondrial redox interface. The purine nucleotide cycle consumes aspartate and releases fumarate in a manner involving fatty acid oxidation and ATP-citrate lyase activity. Participates in pattern recognition receptor (PRR)-induced cytokines in macrophages: associates with the NOD2-signaling complex and promotes optimal NOD2-induced signaling, cytokine secretion and bacterial clearance. Localizes to the endoplasmic reticulum upon PRR stimulation of macrophages and associates with endoplasmic reticulum-stress sensors, promoting the endoplasmic reticulum unfolded protein response (UPR). Does not show laccase activity. The chain is Purine nucleoside phosphorylase LACC1 from Homo sapiens (Human).